Here is a 140-residue protein sequence, read N- to C-terminus: Peptide methionine sulfoxide reductase MsrB (140 aa).

Residues 9–131 (DALWREKLTP…NSASIVLDSE (123 aa)) enclose the MsrB domain. Zn(2+) contacts are provided by Cys48, Cys51, Cys97, and Cys100. The active-site Nucleophile is the Cys120.

The protein belongs to the MsrB Met sulfoxide reductase family. Zn(2+) is required as a cofactor.

It carries out the reaction L-methionyl-[protein] + [thioredoxin]-disulfide + H2O = L-methionyl-(R)-S-oxide-[protein] + [thioredoxin]-dithiol. The polypeptide is Peptide methionine sulfoxide reductase MsrB (Cellvibrio japonicus (strain Ueda107) (Pseudomonas fluorescens subsp. cellulosa)).